A 157-amino-acid chain; its full sequence is Serine-protein kinase RsbW (157 aa).

It belongs to the anti-sigma-factor family.

The catalysed reaction is L-seryl-[protein] + ATP = O-phospho-L-seryl-[protein] + ADP + H(+). It catalyses the reaction L-threonyl-[protein] + ATP = O-phospho-L-threonyl-[protein] + ADP + H(+). Negative regulator of sigma-B activity. Phosphorylates and inactivates its specific antagonist protein, RsbV. Upon phosphorylation of RsbV, RsbW is released and binds to sigma-B, thereby blocking its ability to form an RNA polymerase holoenzyme (E-sigma-B). The sequence is that of Serine-protein kinase RsbW from Listeria innocua serovar 6a (strain ATCC BAA-680 / CLIP 11262).